Consider the following 371-residue polypeptide: Beta-1,3-galactosyltransferase 4 (371 aa).

Topologically, residues 1–4 (MPLS) are cytoplasmic. The chain crosses the membrane as a helical; Signal-anchor for type II membrane protein span at residues 5-25 (LFRRLLLAVLLLVIIWTLFGP). Residues 26–371 (SGLGEELLSL…RCRFIAWLNS (346 aa)) lie on the Lumenal side of the membrane. N-linked (GlcNAc...) asparagine glycosylation is present at Asn143. Positions 187-208 (GGPSEQWQKGKEPQEETTAVHK) are disordered. The segment covering 194–207 (QKGKEPQEETTAVH) has biased composition (basic and acidic residues).

The protein belongs to the glycosyltransferase 31 family. Highly expressed in thymus, spleen, kidney and testis and, to a lesser extent, in brain and liver.

It localises to the golgi apparatus membrane. It catalyses the reaction a ganglioside GM2 (d18:1(4E)) + UDP-alpha-D-galactose = a ganglioside GM1 (d18:1(4E)) + UDP + H(+). The enzyme catalyses a ganglioside GM2 + UDP-alpha-D-galactose = a ganglioside GM1 + UDP + H(+). The catalysed reaction is a ganglioside GD2 (d18:1(4E)) + UDP-alpha-D-galactose = a ganglioside GD1b (d18:1(4E)) + UDP + H(+). It carries out the reaction a ganglioside GA2 (d18:1(4E)) + UDP-alpha-D-galactose = a ganglioside GA1 (d18:1(4E)) + UDP + H(+). It functions in the pathway protein modification; protein glycosylation. Its function is as follows. Involved in GM1/GD1B/GA1 ganglioside biosynthesis. The protein is Beta-1,3-galactosyltransferase 4 (B3galt4) of Rattus norvegicus (Rat).